A 1187-amino-acid polypeptide reads, in one-letter code: Serine/threonine-protein kinase SIK3 homolog (1187 aa).

Low complexity predominate over residues 1–15 (MAAVSSGAAAAAGIP). Positions 1 to 41 (MAAVSSGAAAAAGIPNPNPNRERPQQQQQQQPASAALHPVA) are disordered. Residues 59 to 310 (YEMERTIGKG…MEQICKNKWM (252 aa)) form the Protein kinase domain. ATP contacts are provided by residues 65 to 73 (IGKGNFAVV) and Lys-88. The Proton acceptor role is filled by Asp-181. The residue at position 214 (Thr-214) is a Phosphothreonine. Ser-218 carries the post-translational modification Phosphoserine. A UBA domain is found at 337-377 (LINEQVLMAMAEMGFDRERTLQSLHADSYDHYSATYSLLSD). 3 disordered regions span residues 548–587 (LKRP…VQRS), 697–776 (IQPS…PPGS), and 1060–1092 (CADA…GALQ). The segment covering 570–581 (VDEEGSDAEPDP) has biased composition (acidic residues). The segment covering 739–749 (VQYQHGSALYQ) has biased composition (polar residues).

This sequence belongs to the protein kinase superfamily. CAMK Ser/Thr protein kinase family. SNF1 subfamily. Requires Mg(2+) as cofactor.

The enzyme catalyses L-seryl-[protein] + ATP = O-phospho-L-seryl-[protein] + ADP + H(+). It catalyses the reaction L-threonyl-[protein] + ATP = O-phospho-L-threonyl-[protein] + ADP + H(+). This Danio rerio (Zebrafish) protein is Serine/threonine-protein kinase SIK3 homolog.